Here is a 200-residue protein sequence, read N- to C-terminus: Shikimate kinase (200 aa).

33-38 (GAGKST) contributes to the ATP binding site. Ser37 contributes to the Mg(2+) binding site. Substrate contacts are provided by Asp55, Arg79, and Gly101. Arg139 is a binding site for ATP. Arg158 lines the substrate pocket.

The protein belongs to the shikimate kinase family. Monomer. Mg(2+) is required as a cofactor.

It localises to the cytoplasm. It catalyses the reaction shikimate + ATP = 3-phosphoshikimate + ADP + H(+). It functions in the pathway metabolic intermediate biosynthesis; chorismate biosynthesis; chorismate from D-erythrose 4-phosphate and phosphoenolpyruvate: step 5/7. In terms of biological role, catalyzes the specific phosphorylation of the 3-hydroxyl group of shikimic acid using ATP as a cosubstrate. In Brucella abortus (strain S19), this protein is Shikimate kinase.